Here is a 243-residue protein sequence, read N- to C-terminus: Benzil reductase ((S)-benzoin forming) (243 aa).

5 residues coordinate NADP(+): Ile6, Asn80, Tyr147, Lys151, and Thr184. Tyr147 serves as the catalytic Proton acceptor.

Belongs to the short-chain dehydrogenases/reductases (SDR) family.

It is found in the cytoplasm. The enzyme catalyses (S)-benzoin + NADP(+) = benzil + NADPH + H(+). Reduces benzil stereospecifically to (S)-benzoin. The polypeptide is Benzil reductase ((S)-benzoin forming) (yueD) (Bacillus subtilis (strain 168)).